Here is a 140-residue protein sequence, read N- to C-terminus: ATP synthase epsilon chain (140 aa).

This sequence belongs to the ATPase epsilon chain family. F-type ATPases have 2 components, CF(1) - the catalytic core - and CF(0) - the membrane proton channel. CF(1) has five subunits: alpha(3), beta(3), gamma(1), delta(1), epsilon(1). CF(0) has three main subunits: a, b and c.

It localises to the cell inner membrane. Functionally, produces ATP from ADP in the presence of a proton gradient across the membrane. In Neisseria meningitidis serogroup C / serotype 2a (strain ATCC 700532 / DSM 15464 / FAM18), this protein is ATP synthase epsilon chain.